Reading from the N-terminus, the 126-residue chain is Aspartate 1-decarboxylase (126 aa).

The Schiff-base intermediate with substrate; via pyruvic acid role is filled by serine 25. Serine 25 carries the post-translational modification Pyruvic acid (Ser). Threonine 57 is a binding site for substrate. Tyrosine 58 (proton donor) is an active-site residue. 73 to 75 (GAA) contributes to the substrate binding site.

This sequence belongs to the PanD family. In terms of assembly, heterooctamer of four alpha and four beta subunits. Pyruvate serves as cofactor. In terms of processing, is synthesized initially as an inactive proenzyme, which is activated by self-cleavage at a specific serine bond to produce a beta-subunit with a hydroxyl group at its C-terminus and an alpha-subunit with a pyruvoyl group at its N-terminus.

Its subcellular location is the cytoplasm. It carries out the reaction L-aspartate + H(+) = beta-alanine + CO2. Its pathway is cofactor biosynthesis; (R)-pantothenate biosynthesis; beta-alanine from L-aspartate: step 1/1. Catalyzes the pyruvoyl-dependent decarboxylation of aspartate to produce beta-alanine. This Citrobacter koseri (strain ATCC BAA-895 / CDC 4225-83 / SGSC4696) protein is Aspartate 1-decarboxylase.